The chain runs to 695 residues: Frizzled and smoothened-like protein O (695 aa).

The N-terminal stretch at 1–23 (MKKLNYLLIVSFIFILNLLISKS) is a signal peptide. Over 24-233 (QVLIDVTAKC…KEYKTKFYSE (210 aa)) the chain is Extracellular. Residues 28–173 (DVTAKCELID…ANEEIQCSGP (146 aa)) enclose the FZ domain. 5 disulfides stabilise this stretch: Cys33-Cys96, Cys42-Cys89, Cys80-Cys125, Cys114-Cys170, and Cys118-Cys138. N-linked (GlcNAc...) asparagine glycosylation is present at Asn47. N-linked (GlcNAc...) asparagine glycans are attached at residues Asn137 and Asn178. The chain crosses the membrane as a helical span at residues 234-254 (AILFSFSTACSFYLIFTFGVF). Residues 255–262 (PNKYTNRN) lie on the Cytoplasmic side of the membrane. Residues 263-283 (WIIVYLGITAICLAISYAVQE) form a helical membrane-spanning segment. Residues 284-307 (ARYGGGDWRCTSDPGRYKSSEDGT) are Extracellular-facing. Residues 308–328 (CILGGFFFQIGGLGTILFLSL) form a helical membrane-spanning segment. Topologically, residues 329 to 343 (YSFDMFLTMNMMTNK) are cytoplasmic. Residues 344 to 364 (YFIQTSVGMWALIIFYALLPI) form a helical membrane-spanning segment. Residues 365-387 (KHYESSIASAGCWLSNEDNMFWQ) are Extracellular-facing. Residues 388–408 (YFCFYVPSYVATFFLGVFIIT) traverse the membrane as a helical segment. Residues 409–435 (SIYKVFKMTVMFKSIKDKRILLLNIRS) are Cytoplasmic-facing. A helical transmembrane segment spans residues 436-456 (IIFLIAIMFCVSFSTMYPLYV). The Extracellular segment spans residues 457-500 (TYNGDDFSKSVEVYVTCLYANIPNGNEVCPQIVFPQFSLRYMNA). Residues 501–521 (ITMAIIGIVGLIGLGIDPHIL) traverse the membrane as a helical segment. Topologically, residues 522-695 (QIYRESIRFK…NIERINSDNV (174 aa)) are cytoplasmic. Residues 545–556 (SPQPLKQGSTTD) show a composition bias toward polar residues. A disordered region spans residues 545-695 (SPQPLKQGST…NIERINSDNV (151 aa)). Over residues 593 to 608 (NLSASSESSNNLLNQS) the composition is skewed to low complexity. Positions 609–625 (TPGNLNINESISSIDTS) are enriched in polar residues. Positions 626–686 (NNNNNNNNNN…NNNNNNNNNN (61 aa)) are enriched in low complexity. Positions 653-691 (NNNNNNNNNNNNNNNNNNNNYSNNNNNNNNNNNNIERIN) form a coiled coil.

Belongs to the G-protein coupled receptor Fz/Smo family.

The protein resides in the membrane. This Dictyostelium discoideum (Social amoeba) protein is Frizzled and smoothened-like protein O (fslO).